The primary structure comprises 268 residues: 4-diphosphocytidyl-2-C-methyl-D-erythritol kinase (268 aa).

Lysine 9 is a catalytic residue. 88-98 (PPGAGLGGGSS) contacts ATP. Residue aspartate 130 is part of the active site.

It belongs to the GHMP kinase family. IspE subfamily.

The catalysed reaction is 4-CDP-2-C-methyl-D-erythritol + ATP = 4-CDP-2-C-methyl-D-erythritol 2-phosphate + ADP + H(+). It participates in isoprenoid biosynthesis; isopentenyl diphosphate biosynthesis via DXP pathway; isopentenyl diphosphate from 1-deoxy-D-xylulose 5-phosphate: step 3/6. Catalyzes the phosphorylation of the position 2 hydroxy group of 4-diphosphocytidyl-2C-methyl-D-erythritol. The polypeptide is 4-diphosphocytidyl-2-C-methyl-D-erythritol kinase (Aquifex aeolicus (strain VF5)).